The sequence spans 512 residues: Spermatocyte protein spe-8 (512 aa).

Positions 1-85 (MRSKSSEGDL…PKPSSDNNNS (85 aa)) are disordered. Over residues 15–41 (TQSREDKETTATYSEDTKPETQKERNA) the composition is skewed to basic and acidic residues. A compositionally biased stretch (pro residues) spans 68-78 (EAPPPPPPPKP). Residues 114–205 (FYHGFMGRNE…YEGMTLICGL (92 aa)) enclose the SH2 domain. Residues 217–485 (VTLNKKLGEG…KEEVGFHEIE (269 aa)) form the Protein kinase domain. ATP is bound by residues 223 to 231 (LGEGQFGEV) and Lys-250. The Proton acceptor role is filled by Asp-344.

The protein belongs to the protein kinase superfamily. Tyr protein kinase family. Fes/fps subfamily. Expression is restricted to male germline.

It localises to the cell membrane. The protein localises to the cytoplasm. The catalysed reaction is L-tyrosyl-[protein] + ATP = O-phospho-L-tyrosyl-[protein] + ADP + H(+). Functionally, probable non-receptor tyrosine-protein kinase which plays a role in spermatid activation (spermiogenesis) in hermaphrodites. The polypeptide is Spermatocyte protein spe-8 (Caenorhabditis elegans).